The primary structure comprises 581 residues: Intermediate filament protein ifa-2 (581 aa).

Disordered regions lie at residues 1–35 (MTDPDSYRSSITSRPSFNRTVTSSSQNYGAPGSGN) and 47–68 (SSVSSGLSPYGQNAASTIRDNR). Residues 1 to 74 (MTDPDSYRSS…RDNREREKKE (74 aa)) form a head region. Residues 7 to 28 (YRSSITSRPSFNRTVTSSSQNY) are compositionally biased toward polar residues. One can recognise an IF rod domain in the interval 71–424 (EKKEIMELND…QMLEGNSEGN (354 aa)). The interval 75–106 (IMELNDRLASYIEKVRFLDAQNRKLDADLKML) is coil 1A. The linker 1 stretch occupies residues 107 to 120 (QGRFGKSTGSVKVM). Residues 121–258 (YEMEITTATN…RGFETELKEL (138 aa)) are coil 1B. Positions 259 to 276 (QAQAARDTTSENREYFKN) are linker 12. The segment at 277-424 (ELANAMRDIR…QMLEGNSEGN (148 aa)) is coil 2. A tail region spans residues 425–578 (GLRQLVEKVV…THIQRQSQQT (154 aa)). The tract at residues 449-469 (RVVKGEHSSRTSYQRSAKGNV) is disordered. The 118-residue stretch at 457–574 (SRTSYQRSAK…EERATHIQRQ (118 aa)) folds into the LTD domain.

This sequence belongs to the intermediate filament family. Forms some heteromeric filaments with ifb-1. In terms of tissue distribution, mainly expressed in regions of the hypodermis adjacent to muscle. Expressed in longitudinal stripes where the mechanosensory neurons interface with the hypodermis. Also expressed to the uterine seam and within the uterine-vulval cells.

Its subcellular location is the cell junction. The protein localises to the hemidesmosome. Cytoplasmic intermediate filaments provide mechanical strength to cells. Essential protein, involved in attachment structures in epidermal cells that connect muscles to the external cuticle. Probably acts by forming hypodermal hemidesmosome complexes that help mediate muscle-cuticle force transduction. Although expressed during embryogenesis, it is not required for embryonic development of muscle-cuticle linkages nor for the localization of other proteins to the hemidesmosomes in embryos. The sequence is that of Intermediate filament protein ifa-2 from Caenorhabditis elegans.